The primary structure comprises 29 residues: Glucagon (29 aa).

It belongs to the glucagon family.

The protein localises to the secreted. Promotes hydrolysis of glycogen and lipids, and raises the blood sugar level. This chain is Glucagon (gcg), found in Thunnus obesus (Bigeye tuna).